A 265-amino-acid polypeptide reads, in one-letter code: Protein N-terminal and lysine N-methyltransferase EFM7 (265 aa).

S-adenosyl-L-methionine contacts are provided by residues Trp-55, 81-83 (GAA), Asp-103, Trp-141, and Ala-169.

The protein belongs to the class I-like SAM-binding methyltransferase superfamily. EFM7 family.

The protein resides in the cytoplasm. Functionally, S-adenosyl-L-methionine-dependent protein methyltransferase that trimethylates the N-terminal glycine 'Gly-2' of elongation factor 1-alpha, before also catalyzing the mono- and dimethylation of 'Lys-3'. The protein is Protein N-terminal and lysine N-methyltransferase EFM7 of Gibberella zeae (strain ATCC MYA-4620 / CBS 123657 / FGSC 9075 / NRRL 31084 / PH-1) (Wheat head blight fungus).